The sequence spans 109 residues: uncharacterized protein (109 aa).

The HTH hxlR-type domain occupies 10 to 109; that stretch reads APFEYTLSLI…WGMAQGGPHM (100 aa).

This is an uncharacterized protein from Bacillus subtilis (strain 168).